Here is a 1443-residue protein sequence, read N- to C-terminus: MGYQNHPSGSNSFHGEFKRCHSKPSKGAVASMINSEIGAVLAVMRRNVRWGVRYIADDDQLEHSLIHSLKELRKQIFSWQSNWQYVDPRLYIQPFLDVILSDETGAPITGVALSSVYKILTLEVFTLETVNVGEAMHIIVDAVKSCRFEVTDPASEEVVLMKILQVLLACVKSKASNGLSNQDICTIVNTCLRVVHQSSSKSELLQRIARHTMHELIRCIFSQLPFISPLANECELHVDNKVGTVDWDPNSGEKRVENGNIASISDTLGTDKDDPSSEMVIPETDLRNDEKKTEVSDDLNAAANGENAMMAPYGIPCMVEIFHFLCTLLNVGENGEVNSRSNPIAFDEDVPLFALGLINSAIELGGPSFREHPKLLTLIQDDLFCNLMQFGMSMSPLILSTVCSIVLNLYLNLRTELKVQLEAFFSYVLLRIAQSKHGSSYQQQEVAMEALVDLCRQHTFIAEVFANFDCDITCSNVFEDVSNLLSKNAFPVNGPLSAMHILALDGLISMVQGMAERVGEELPASDVPTHEERYEEFWTVRCENYGDPNFWVPFVRKVKHIKKKLMLGADRFNRDPNKGLQYLQGVHLLPEKLDPKSVACFFRYTCGLDKNVMGDFLGNHDQFCIQVLHEFAKTFDFQNMNLATALRLFVGTFKLSGEAQKIHRVLEAFSERYYEQSPHILIDKDAAFVLAYSIILLNTDQHNAQVKTRMTEEDFIRNNRTINGGADLPREYLSEIYHSIRHSEIQMDEDKGTGFQLMTASRWISVIYKSKETSPYIQCDAASHLDRDMFYIVSGPTIAATSVVFEQAEQEDVLRRCIDGLLAIAKLSAYYHLNSVLDDLVVSLCKFTPFFAPLSADEAVLVLGEDARARMATEAVFLIANKYGDYISAGWKNILECVLSLNKLHILPDHIASDAADDPELSTSNLEQEKPSANPVPVVSQSQPSAMPRKSSSFIGRFLLSFDSEETKPLPSEEELAAYKHARGIVKDCHIDSIFSDSKFLQAESLQQLVNSLIRASGKDEASSVFCLELLIAVTLNNRDRILLIWPTVYEHILGIVQLTLTPCTLVEKAVFGVLKICQRLLPYKENLTDELLKSLQLVLKLKAKVADAYCERIAQEVVRLVKANASHVRSRTGWRTIISLLSITARHPEASEAGFEALRFIMSEGAHLLPSNYELCLDAASHFAESRVGEVDRSISAIDLMSNSVFCLARWSQEAKNSIGETDAMMKLSEDIGKMWLKLVKNLKKVCLDQRDEVRNHAISMLQRAIAGADGIMLPQPLWFQCFDSAVFILLDDVLTFSIENSRKTLKKTVEETLVLATKLMSKAFLQSLQDISQQPSFCRLWVGVLNRLETYMSTEFRGKRSEKVNELIPELLKNTLLVMKATGVLLPGDDIGSDSFWQLTWLHVNKISPSLQSEVFPQEELDQFQRRNAKPEDPPVPGNEV.

An SEC7 domain is found at Phe-554–Ser-743. Glu-658 is a catalytic residue. Disordered stretches follow at residues Asp-917–Arg-949 and Asp-1424–Val-1443. Over residues Val-939–Arg-949 the composition is skewed to polar residues. Residues Gln-1425–Asp-1435 are compositionally biased toward basic and acidic residues.

As to quaternary structure, homodimer.

It is found in the cytoplasm. Its subcellular location is the cytosol. It localises to the golgi apparatus membrane. In terms of biological role, activates the ARF proteins by exchanging bound GDP for free GTP. Plays a role in vesicular protein sorting. Acts as the major regulator of retrograde Golgi to endoplasmic reticulum trafficking but is also involved in the endocytosis process. Could function redundantly with GNOM. Regulates vesicle trafficking required for the coordinated polar localization of auxin efflux carriers which in turn determines the direction of auxin flow. Mediates the endocytosis of PIN2 from plasma membrane to endosomal compartments. Required for maintenance of endoplasmic reticulum morphology. The sequence is that of ARF guanine-nucleotide exchange factor GNL1 (GNL1) from Arabidopsis thaliana (Mouse-ear cress).